The following is a 153-amino-acid chain: Small ribosomal subunit protein bS16 (153 aa).

The interval 130 to 153 is disordered; sequence EAEAAAAAEEAPAEEAAEEAPAEA. Residues 140–153 are compositionally biased toward acidic residues; it reads APAEEAAEEAPAEA.

The protein belongs to the bacterial ribosomal protein bS16 family.

This chain is Small ribosomal subunit protein bS16, found in Bifidobacterium longum (strain NCC 2705).